The primary structure comprises 72 residues: Putative transmembrane protein DDB_G0272126 (72 aa).

Helical transmembrane passes span 6–26 and 38–58; these read KIIKSSYTLLSFFYFIANTII and IILVSLYYLVFSLFITRIFYG.

It localises to the membrane. The protein is Putative transmembrane protein DDB_G0272126 of Dictyostelium discoideum (Social amoeba).